The sequence spans 188 residues: Pyridoxal 5'-phosphate synthase subunit PdxT (188 aa).

Position 46–48 (46–48) interacts with L-glutamine; sequence GES. Catalysis depends on Cys78, which acts as the Nucleophile. L-glutamine contacts are provided by residues Arg105 and 133 to 134; that span reads IR. Residues His169 and Glu171 each act as charge relay system in the active site.

The protein belongs to the glutaminase PdxT/SNO family. In terms of assembly, in the presence of PdxS, forms a dodecamer of heterodimers. Only shows activity in the heterodimer.

The catalysed reaction is aldehydo-D-ribose 5-phosphate + D-glyceraldehyde 3-phosphate + L-glutamine = pyridoxal 5'-phosphate + L-glutamate + phosphate + 3 H2O + H(+). The enzyme catalyses L-glutamine + H2O = L-glutamate + NH4(+). It participates in cofactor biosynthesis; pyridoxal 5'-phosphate biosynthesis. In terms of biological role, catalyzes the hydrolysis of glutamine to glutamate and ammonia as part of the biosynthesis of pyridoxal 5'-phosphate. The resulting ammonia molecule is channeled to the active site of PdxS. In Thermosipho africanus (strain TCF52B), this protein is Pyridoxal 5'-phosphate synthase subunit PdxT.